A 618-amino-acid chain; its full sequence is 1-deoxy-D-xylulose-5-phosphate synthase (618 aa).

Residues histidine 70 and 111-113 (GHS) contribute to the thiamine diphosphate site. Mg(2+) is bound at residue aspartate 142. Residues 143–144 (GS), asparagine 171, tyrosine 278, and glutamate 360 each bind thiamine diphosphate. Asparagine 171 contacts Mg(2+).

It belongs to the transketolase family. DXPS subfamily. In terms of assembly, homodimer. Mg(2+) serves as cofactor. Thiamine diphosphate is required as a cofactor.

It carries out the reaction D-glyceraldehyde 3-phosphate + pyruvate + H(+) = 1-deoxy-D-xylulose 5-phosphate + CO2. It participates in metabolic intermediate biosynthesis; 1-deoxy-D-xylulose 5-phosphate biosynthesis; 1-deoxy-D-xylulose 5-phosphate from D-glyceraldehyde 3-phosphate and pyruvate: step 1/1. Functionally, catalyzes the acyloin condensation reaction between C atoms 2 and 3 of pyruvate and glyceraldehyde 3-phosphate to yield 1-deoxy-D-xylulose-5-phosphate (DXP). In Helicobacter pylori (strain HPAG1), this protein is 1-deoxy-D-xylulose-5-phosphate synthase.